A 248-amino-acid polypeptide reads, in one-letter code: Gas vesicle protein J (248 aa).

The 1; truncated repeat unit spans residues 121 to 140; that stretch reads DVKDDLYQTSAKIPSPVDTP. Residues 121-245 form a 6 X 21 AA approximate tandem repeats region; it reads DVKDDLYQTS…EEIPSSVDPA (125 aa). A run of 5 repeats spans residues 141-161, 162-182, 183-203, 204-224, and 225-245.

Belongs to the gas vesicle GvpA family. In terms of assembly, interacts with GvpA.

It localises to the gas vesicle. Its function is as follows. A minor component of the gas vesicle, might be involved in nucleating gas vesicle formation. Gas vesicles (GV) are hollow, gas filled proteinaceous nanostructures. During planktonic growth they allow positioning of the organism at a favorable depth for light or nutrient acquisition. This Dolichospermum flosaquae (Anabaena flos-aquae) protein is Gas vesicle protein J.